Consider the following 599-residue polypeptide: Sulfite reductase [NADPH] flavoprotein alpha-component (599 aa).

One can recognise a Flavodoxin-like domain in the interval 64–202 (VTLISASQTG…AASEWRARVV (139 aa)). FMN is bound by residues 70-75 (SQTGNA), 117-120 (STQG), and 153-162 (LGDTSYEFFC). Residues 234–448 (DAPLTATLSV…IEHNDNFRLP (215 aa)) enclose the FAD-binding FR-type domain. Residues Thr322, Ala356, 386–389 (RLYS), 404–406 (TVG), Tyr410, and 419–422 (GGAS) contribute to the FAD site. NADP(+) is bound by residues 519–520 (SR), 525–529 (KIYVQ), and Asp561. Tyr599 serves as a coordination point for FAD.

This sequence belongs to the NADPH-dependent sulphite reductase flavoprotein subunit CysJ family. In the N-terminal section; belongs to the flavodoxin family. The protein in the C-terminal section; belongs to the flavoprotein pyridine nucleotide cytochrome reductase family. Alpha(8)-beta(8). The alpha component is a flavoprotein, the beta component is a hemoprotein. The cofactor is FAD. Requires FMN as cofactor.

The catalysed reaction is hydrogen sulfide + 3 NADP(+) + 3 H2O = sulfite + 3 NADPH + 4 H(+). Its pathway is sulfur metabolism; hydrogen sulfide biosynthesis; hydrogen sulfide from sulfite (NADPH route): step 1/1. Functionally, component of the sulfite reductase complex that catalyzes the 6-electron reduction of sulfite to sulfide. This is one of several activities required for the biosynthesis of L-cysteine from sulfate. The flavoprotein component catalyzes the electron flow from NADPH -&gt; FAD -&gt; FMN to the hemoprotein component. This Salmonella paratyphi A (strain ATCC 9150 / SARB42) protein is Sulfite reductase [NADPH] flavoprotein alpha-component.